The following is a 917-amino-acid chain: Hexokinase-1 (917 aa).

At M1 the chain carries N-acetylmethionine. The interval M1 to Y10 is mitochondrial-binding peptide (MBP). Hexokinase domains lie at D16–A458 and A464–A906. ATP contacts are provided by residues R30 and D84–S89. Positions D73–V207 are hexokinase small subdomain 1. Residue D84 to R91 coordinates D-glucose 6-phosphate. D-glucose is bound by residues S155, T172–K173, and N208–D209. The hexokinase large subdomain 1 stretch occupies residues N208 to S447. The D-glucose 6-phosphate site is built by D209 and T232. Residues N235, E260, and Q291 to E294 each bind D-glucose. S337 carries the post-translational modification Phosphoserine. Residue N345 participates in ATP binding. Position 413 to 415 (D413 to S415) interacts with D-glucose 6-phosphate. R425–R426 provides a ligand contact to ATP. Residues S449 and D532–T536 contribute to the D-glucose 6-phosphate site. Residues D521–V655 are hexokinase small subdomain 2. D532–N537 contacts ATP. Residues S603 to F604, T620 to K621, and N656 to D657 each bind D-glucose. The hexokinase large subdomain 2 stretch occupies residues N656–D895. D657 and T680 together coordinate D-glucose 6-phosphate. An ATP-binding site is contributed by T680. D-glucose-binding positions include S682–N683, E708, and E742. Residues G747–M748, T784–S788, and T863–L867 contribute to the ATP site. Residues D861–T863 and S897 each bind D-glucose 6-phosphate.

This sequence belongs to the hexokinase family. In terms of assembly, monomer. Interacts with RABL2/RABL2A; binds preferentially to GTP-bound RABL2. Interacts with VDAC1. The HK1-VDAC1 complex interacts with ATF2. Interacts (via N-terminal spermatogenic cell-specific region) with PFKM (via C-terminus). Interacts with SMAD5. In terms of tissue distribution, isoform 2: Erythrocyte specific. Isoform 3: Testis-specific. Isoform 4: Testis-specific.

It localises to the mitochondrion outer membrane. The protein localises to the cytoplasm. The protein resides in the cytosol. It catalyses the reaction a D-hexose + ATP = a D-hexose 6-phosphate + ADP + H(+). The catalysed reaction is D-fructose + ATP = D-fructose 6-phosphate + ADP + H(+). The enzyme catalyses D-glucose + ATP = D-glucose 6-phosphate + ADP + H(+). It carries out the reaction D-mannose + ATP = D-mannose 6-phosphate + ADP + H(+). It catalyses the reaction D-glucosamine + ATP = D-glucosamine 6-phosphate + ADP + H(+). It participates in carbohydrate metabolism; hexose metabolism. It functions in the pathway carbohydrate degradation; glycolysis; D-glyceraldehyde 3-phosphate and glycerone phosphate from D-glucose: step 1/4. Its activity is regulated as follows. Hexokinase is an allosteric enzyme inhibited by its product D-glucose 6-phosphate. Hexokinase activity is inhibited by N-acetyl-D-glucosamine. Its function is as follows. Catalyzes the phosphorylation of various hexoses, such as D-glucose, D-glucosamine, D-fructose, D-mannose and 2-deoxy-D-glucose, to hexose 6-phosphate (D-glucose 6-phosphate, D-glucosamine 6-phosphate, D-fructose 6-phosphate, D-mannose 6-phosphate and 2-deoxy-D-glucose 6-phosphate, respectively). Does not phosphorylate N-acetyl-D-glucosamine. Mediates the initial step of glycolysis by catalyzing phosphorylation of D-glucose to D-glucose 6-phosphate. Involved in innate immunity and inflammation by acting as a pattern recognition receptor for bacterial peptidoglycan. When released in the cytosol, N-acetyl-D-glucosamine component of bacterial peptidoglycan inhibits the hexokinase activity of HK1 and causes its dissociation from mitochondrial outer membrane, thereby activating the NLRP3 inflammasome. In Homo sapiens (Human), this protein is Hexokinase-1.